The primary structure comprises 54 residues: ATP synthase F(0) complex subunit 8 (54 aa).

Residues 13-35 (ALSLWVCFPLMMLSLSSFLPLTL) traverse the membrane as a helical segment.

It belongs to the ATPase protein 8 family. As to quaternary structure, component of the ATP synthase complex composed at least of ATP5F1A/subunit alpha, ATP5F1B/subunit beta, ATP5MC1/subunit c (homooctomer), MT-ATP6/subunit a, MT-ATP8/subunit 8, ATP5ME/subunit e, ATP5MF/subunit f, ATP5MG/subunit g, ATP5MK/subunit k, ATP5MJ/subunit j, ATP5F1C/subunit gamma, ATP5F1D/subunit delta, ATP5F1E/subunit epsilon, ATP5PF/subunit F6, ATP5PB/subunit b, ATP5PD/subunit d, ATP5PO/subunit OSCP. ATP synthase complex consists of a soluble F(1) head domain (subunits alpha(3) and beta(3)) - the catalytic core - and a membrane F(0) domain - the membrane proton channel (subunits c, a, 8, e, f, g, k and j). These two domains are linked by a central stalk (subunits gamma, delta, and epsilon) rotating inside the F1 region and a stationary peripheral stalk (subunits F6, b, d, and OSCP).

Its subcellular location is the mitochondrion membrane. In terms of biological role, subunit 8, of the mitochondrial membrane ATP synthase complex (F(1)F(0) ATP synthase or Complex V) that produces ATP from ADP in the presence of a proton gradient across the membrane which is generated by electron transport complexes of the respiratory chain. ATP synthase complex consist of a soluble F(1) head domain - the catalytic core - and a membrane F(1) domain - the membrane proton channel. These two domains are linked by a central stalk rotating inside the F(1) region and a stationary peripheral stalk. During catalysis, ATP synthesis in the catalytic domain of F(1) is coupled via a rotary mechanism of the central stalk subunits to proton translocation. In vivo, can only synthesize ATP although its ATP hydrolase activity can be activated artificially in vitro. Part of the complex F(0) domain. This is ATP synthase F(0) complex subunit 8 from Myxine glutinosa (Atlantic hagfish).